We begin with the raw amino-acid sequence, 869 residues long: DNA mismatch repair protein MutS (869 aa).

602–609 (GPNMSGKS) is an ATP binding site.

This sequence belongs to the DNA mismatch repair MutS family.

Functionally, this protein is involved in the repair of mismatches in DNA. It is possible that it carries out the mismatch recognition step. This protein has a weak ATPase activity. This is DNA mismatch repair protein MutS from Staphylococcus carnosus (strain TM300).